The chain runs to 407 residues: D-inositol 3-phosphate glycosyltransferase (407 aa).

Position 2 (His2) interacts with 1D-myo-inositol 3-phosphate. UDP-N-acetyl-alpha-D-glucosamine-binding positions include 8-9 and Gly16; that span reads QP. Residues 13-18, Arg71, Tyr104, Thr128, and Arg148 each bind 1D-myo-inositol 3-phosphate; that span reads DAGGLN. Positions 222 and 227 each coordinate UDP-N-acetyl-alpha-D-glucosamine. Mg(2+)-binding residues include Tyr297, Arg298, and Ala300. Residues Glu310 and Glu318 each coordinate UDP-N-acetyl-alpha-D-glucosamine. Thr324 lines the Mg(2+) pocket.

This sequence belongs to the glycosyltransferase group 1 family. MshA subfamily. Homodimer.

The catalysed reaction is 1D-myo-inositol 3-phosphate + UDP-N-acetyl-alpha-D-glucosamine = 1D-myo-inositol 2-acetamido-2-deoxy-alpha-D-glucopyranoside 3-phosphate + UDP + H(+). In terms of biological role, catalyzes the transfer of a N-acetyl-glucosamine moiety to 1D-myo-inositol 3-phosphate to produce 1D-myo-inositol 2-acetamido-2-deoxy-glucopyranoside 3-phosphate in the mycothiol biosynthesis pathway. This chain is D-inositol 3-phosphate glycosyltransferase, found in Frankia alni (strain DSM 45986 / CECT 9034 / ACN14a).